Reading from the N-terminus, the 152-residue chain is UPF0266 membrane protein YobD (152 aa).

A run of 3 helical transmembrane segments spans residues 6–26 (LVLI…QFIM), 45–65 (IDSV…VTNH), and 67–87 (ALIT…IFWI).

It belongs to the UPF0266 family.

It is found in the cell inner membrane. This is UPF0266 membrane protein YobD from Shigella dysenteriae serotype 1 (strain Sd197).